Here is a 474-residue protein sequence, read N- to C-terminus: tRNA-2-methylthio-N(6)-dimethylallyladenosine synthase (474 aa).

Residues 3–120 (KKLHIKTWGC…LPEMINHVQG (118 aa)) form the MTTase N-terminal domain. Cys-12, Cys-49, Cys-83, Cys-157, Cys-161, and Cys-164 together coordinate [4Fe-4S] cluster. Residues 143–375 (RAEGPTAFVS…QQRISQQAME (233 aa)) form the Radical SAM core domain. One can recognise a TRAM domain in the interval 378–441 (RKMVGTVQRV…ASSLRGILLR (64 aa)).

This sequence belongs to the methylthiotransferase family. MiaB subfamily. In terms of assembly, monomer. [4Fe-4S] cluster serves as cofactor.

It is found in the cytoplasm. The catalysed reaction is N(6)-dimethylallyladenosine(37) in tRNA + (sulfur carrier)-SH + AH2 + 2 S-adenosyl-L-methionine = 2-methylsulfanyl-N(6)-dimethylallyladenosine(37) in tRNA + (sulfur carrier)-H + 5'-deoxyadenosine + L-methionine + A + S-adenosyl-L-homocysteine + 2 H(+). Catalyzes the methylthiolation of N6-(dimethylallyl)adenosine (i(6)A), leading to the formation of 2-methylthio-N6-(dimethylallyl)adenosine (ms(2)i(6)A) at position 37 in tRNAs that read codons beginning with uridine. This is tRNA-2-methylthio-N(6)-dimethylallyladenosine synthase from Yersinia pestis bv. Antiqua (strain Angola).